Consider the following 528-residue polypeptide: GMP synthase [glutamine-hydrolyzing] (528 aa).

The 192-residue stretch at 13–204 folds into the Glutamine amidotransferase type-1 domain; the sequence is AIVILDFGSQ…VYHICGCEPD (192 aa). Cys-90 serves as the catalytic Nucleophile. Active-site residues include His-178 and Glu-180. Residues 205-403 enclose the GMPS ATP-PPase domain; the sequence is WTTSAFIDEA…LGLPEEIVRR (199 aa). Residue 232-238 participates in ATP binding; the sequence is SGGVDSS.

As to quaternary structure, homodimer.

The enzyme catalyses XMP + L-glutamine + ATP + H2O = GMP + L-glutamate + AMP + diphosphate + 2 H(+). The protein operates within purine metabolism; GMP biosynthesis; GMP from XMP (L-Gln route): step 1/1. Its function is as follows. Catalyzes the synthesis of GMP from XMP. In Parasynechococcus marenigrum (strain WH8102), this protein is GMP synthase [glutamine-hydrolyzing].